The primary structure comprises 590 residues: Bacillolysin (590 aa).

An N-terminal signal peptide occupies residues 1 to 24 (MKKVWFSLLGGAMLLGSVASGASA). Positions 25 to 286 (ESSVSGPAQL…GSIVFQYDII (262 aa)) are cleaved as a propeptide — activation peptide. Ca(2+) is bound by residues D339, D341, and D419. Residue H423 coordinates Zn(2+). Residue E424 is part of the active site. Zn(2+) is bound by residues H427 and E447. 5 residues coordinate Ca(2+): D466, Y469, T470, I473, and D476. The active-site Proton donor is the H507.

Belongs to the peptidase M4 family. Ca(2+) is required as a cofactor. Zn(2+) serves as cofactor.

It is found in the secreted. It catalyses the reaction Similar, but not identical, to that of thermolysin.. Involved in the generation of beta- and alpha-amylases from the large amylase precursor. This chain is Bacillolysin (npr), found in Paenibacillus polymyxa (Bacillus polymyxa).